The following is a 152-amino-acid chain: Proteolipid protein 2 (152 aa).

The 119-residue stretch at 19 to 137 (FSRTRKGFLL…DAYITFPLRQ (119 aa)) folds into the MARVEL domain. 3 helical membrane passes run 25 to 45 (GFLL…FSTS), 48 to 68 (GYSF…VVYM), and 85 to 105 (FFRT…VLVE). N-linked (GlcNAc...) asparagine glycosylation is present at Asn108. The helical transmembrane segment at 112 to 132 (IAAGALGLCAAGLFGYDAYIT) threads the bilayer.

It localises to the membrane. May play a role in cell differentiation in the intestinal epithelium. The polypeptide is Proteolipid protein 2 (PLP2) (Bos taurus (Bovine)).